A 443-amino-acid polypeptide reads, in one-letter code: Thymidine phosphorylase (443 aa).

This sequence belongs to the thymidine/pyrimidine-nucleoside phosphorylase family. In terms of assembly, homodimer.

It catalyses the reaction thymidine + phosphate = 2-deoxy-alpha-D-ribose 1-phosphate + thymine. It functions in the pathway pyrimidine metabolism; dTMP biosynthesis via salvage pathway; dTMP from thymine: step 1/2. Its function is as follows. The enzymes which catalyze the reversible phosphorolysis of pyrimidine nucleosides are involved in the degradation of these compounds and in their utilization as carbon and energy sources, or in the rescue of pyrimidine bases for nucleotide synthesis. This chain is Thymidine phosphorylase, found in Shewanella oneidensis (strain ATCC 700550 / JCM 31522 / CIP 106686 / LMG 19005 / NCIMB 14063 / MR-1).